The following is a 214-amino-acid chain: MAKKKLNKNWLHDHINDPYVKLAQKEGYRARAVYKLKEIDESEKLIKPGQIIVDLGCTPGSWSQYVRNKLSGSVGGGINGIIIGLDMLEMEPIADVHYIQGDFREQNVLEQLEVVLAGRKVDLVLSDMAPNLSGIAVADAARMMDIIELAIDFAQHHMKPSGSLLVKCFNGSGFNDIVEKFRHEFKTVTQKKPKASRDKSSEIFLLGKTLKNPL.

5 residues coordinate S-adenosyl-L-methionine: glycine 60, tryptophan 62, aspartate 86, aspartate 102, and aspartate 127. Residue lysine 167 is the Proton acceptor of the active site.

This sequence belongs to the class I-like SAM-binding methyltransferase superfamily. RNA methyltransferase RlmE family.

It localises to the cytoplasm. The catalysed reaction is uridine(2552) in 23S rRNA + S-adenosyl-L-methionine = 2'-O-methyluridine(2552) in 23S rRNA + S-adenosyl-L-homocysteine + H(+). Its function is as follows. Specifically methylates the uridine in position 2552 of 23S rRNA at the 2'-O position of the ribose in the fully assembled 50S ribosomal subunit. This is Ribosomal RNA large subunit methyltransferase E from Herminiimonas arsenicoxydans.